A 152-amino-acid chain; its full sequence is SsrA-binding protein (152 aa).

It belongs to the SmpB family.

The protein resides in the cytoplasm. Required for rescue of stalled ribosomes mediated by trans-translation. Binds to transfer-messenger RNA (tmRNA), required for stable association of tmRNA with ribosomes. tmRNA and SmpB together mimic tRNA shape, replacing the anticodon stem-loop with SmpB. tmRNA is encoded by the ssrA gene; the 2 termini fold to resemble tRNA(Ala) and it encodes a 'tag peptide', a short internal open reading frame. During trans-translation Ala-aminoacylated tmRNA acts like a tRNA, entering the A-site of stalled ribosomes, displacing the stalled mRNA. The ribosome then switches to translate the ORF on the tmRNA; the nascent peptide is terminated with the 'tag peptide' encoded by the tmRNA and targeted for degradation. The ribosome is freed to recommence translation, which seems to be the essential function of trans-translation. The chain is SsrA-binding protein from Lactobacillus helveticus (strain DPC 4571).